We begin with the raw amino-acid sequence, 289 residues long: Phosphatidylserine decarboxylase proenzyme (289 aa).

Residues aspartate 88, histidine 145, and serine 251 each act as charge relay system; for autoendoproteolytic cleavage activity in the active site. Residue serine 251 is the Schiff-base intermediate with substrate; via pyruvic acid; for decarboxylase activity of the active site. At serine 251 the chain carries Pyruvic acid (Ser); by autocatalysis.

It belongs to the phosphatidylserine decarboxylase family. PSD-B subfamily. Prokaryotic type I sub-subfamily. Heterodimer of a large membrane-associated beta subunit and a small pyruvoyl-containing alpha subunit. Requires pyruvate as cofactor. In terms of processing, is synthesized initially as an inactive proenzyme. Formation of the active enzyme involves a self-maturation process in which the active site pyruvoyl group is generated from an internal serine residue via an autocatalytic post-translational modification. Two non-identical subunits are generated from the proenzyme in this reaction, and the pyruvate is formed at the N-terminus of the alpha chain, which is derived from the carboxyl end of the proenzyme. The autoendoproteolytic cleavage occurs by a canonical serine protease mechanism, in which the side chain hydroxyl group of the serine supplies its oxygen atom to form the C-terminus of the beta chain, while the remainder of the serine residue undergoes an oxidative deamination to produce ammonia and the pyruvoyl prosthetic group on the alpha chain. During this reaction, the Ser that is part of the protease active site of the proenzyme becomes the pyruvoyl prosthetic group, which constitutes an essential element of the active site of the mature decarboxylase.

It localises to the cell membrane. It catalyses the reaction a 1,2-diacyl-sn-glycero-3-phospho-L-serine + H(+) = a 1,2-diacyl-sn-glycero-3-phosphoethanolamine + CO2. The protein operates within phospholipid metabolism; phosphatidylethanolamine biosynthesis; phosphatidylethanolamine from CDP-diacylglycerol: step 2/2. Functionally, catalyzes the formation of phosphatidylethanolamine (PtdEtn) from phosphatidylserine (PtdSer). The polypeptide is Phosphatidylserine decarboxylase proenzyme (Polaromonas naphthalenivorans (strain CJ2)).